The primary structure comprises 188 residues: Elongation factor P (188 aa).

Belongs to the elongation factor P family.

The protein localises to the cytoplasm. It functions in the pathway protein biosynthesis; polypeptide chain elongation. Involved in peptide bond synthesis. Stimulates efficient translation and peptide-bond synthesis on native or reconstituted 70S ribosomes in vitro. Probably functions indirectly by altering the affinity of the ribosome for aminoacyl-tRNA, thus increasing their reactivity as acceptors for peptidyl transferase. This Gluconacetobacter diazotrophicus (strain ATCC 49037 / DSM 5601 / CCUG 37298 / CIP 103539 / LMG 7603 / PAl5) protein is Elongation factor P.